A 446-amino-acid polypeptide reads, in one-letter code: ATP-dependent protease ATPase subunit HslU (446 aa).

Residues valine 18, 60 to 65 (GVGKTE), aspartate 259, glutamate 324, and arginine 396 each bind ATP.

This sequence belongs to the ClpX chaperone family. HslU subfamily. In terms of assembly, a double ring-shaped homohexamer of HslV is capped on each side by a ring-shaped HslU homohexamer. The assembly of the HslU/HslV complex is dependent on binding of ATP.

The protein resides in the cytoplasm. In terms of biological role, ATPase subunit of a proteasome-like degradation complex; this subunit has chaperone activity. The binding of ATP and its subsequent hydrolysis by HslU are essential for unfolding of protein substrates subsequently hydrolyzed by HslV. HslU recognizes the N-terminal part of its protein substrates and unfolds these before they are guided to HslV for hydrolysis. This is ATP-dependent protease ATPase subunit HslU from Dechloromonas aromatica (strain RCB).